Here is a 71-residue protein sequence, read N- to C-terminus: Large ribosomal subunit protein uL29 (71 aa).

This sequence belongs to the universal ribosomal protein uL29 family.

This Rickettsia typhi (strain ATCC VR-144 / Wilmington) protein is Large ribosomal subunit protein uL29.